A 374-amino-acid chain; its full sequence is MNLQHTPLHDLCRDAGGRMVPFAGWDMPVQFSGLLQEHQAVRQQVGMFDISHMGVLRLEGTNPKDHLQALVPTDLNRIGPGEACYTVLLNETGGILDDLVIYDLGTNKQDSQSLLIVINAACSKTDTIWLKQHLQPAGIALSDAKNNGVLLALQGPQATKVLERLSGESLASLPRFGHRQVQFYGLGAKDPSSVFVARTGYTGEDGFELLLKAEAGRALWLKLLAEGVIPCGLGSRDTLRLEAAMHLYGQDMDINTTPFEAGLGWLVHLEMPAPFMGRTALEQQAEQGPIRRLVGLKLSGRAIARHGYPLLHNNNKVGEITSGTWSPSLEEAIALGYLPTALARIGNEVEVEIRGKHHRATVVKRPFYRRPSLS.

Belongs to the GcvT family. As to quaternary structure, the glycine cleavage system is composed of four proteins: P, T, L and H.

It carries out the reaction N(6)-[(R)-S(8)-aminomethyldihydrolipoyl]-L-lysyl-[protein] + (6S)-5,6,7,8-tetrahydrofolate = N(6)-[(R)-dihydrolipoyl]-L-lysyl-[protein] + (6R)-5,10-methylene-5,6,7,8-tetrahydrofolate + NH4(+). Its function is as follows. The glycine cleavage system catalyzes the degradation of glycine. The sequence is that of Aminomethyltransferase from Prochlorococcus marinus (strain MIT 9313).